The following is a 465-amino-acid chain: Probable oxidoreductase AIM17 (465 aa).

A mitochondrion-targeting transit peptide spans 1–16 (MLRSNLCRGSRILARL). Residues His-246, Asp-248, and His-428 each coordinate Fe cation.

Belongs to the gamma-BBH/TMLD family. It depends on Fe(2+) as a cofactor. L-ascorbate is required as a cofactor.

It localises to the mitochondrion. The protein is Probable oxidoreductase AIM17 (AIM17) of Saccharomyces cerevisiae (strain ATCC 204508 / S288c) (Baker's yeast).